Here is a 146-residue protein sequence, read N- to C-terminus: uncharacterized protein (146 aa).

Disordered regions lie at residues 1 to 33 and 50 to 70; these read MATF…GSYR and QHWR…SWEG.

This is an uncharacterized protein from Homo sapiens (Human).